An 85-amino-acid chain; its full sequence is Large ribosomal subunit protein bL27 (85 aa).

This sequence belongs to the bacterial ribosomal protein bL27 family.

The protein is Large ribosomal subunit protein bL27 of Mycobacteroides abscessus (strain ATCC 19977 / DSM 44196 / CCUG 20993 / CIP 104536 / JCM 13569 / NCTC 13031 / TMC 1543 / L948) (Mycobacterium abscessus).